The following is a 110-amino-acid chain: Parvalbumin alpha (110 aa).

Residue Ser-2 is modified to N-acetylserine. Phosphoserine is present on residues Ser-2, Ser-8, and Ser-24. 2 EF-hand domains span residues 39–74 and 78–110; these read KNPD…FSSD and LSAK…VAES. Ca(2+) contacts are provided by Asp-52, Asp-54, Ser-56, Phe-58, Glu-60, Glu-63, Asp-91, Asp-93, Asp-95, Lys-97, and Glu-102.

As to expression, expressed in the modiolar nerve root (at protein level).

Its function is as follows. In muscle, parvalbumin is thought to be involved in relaxation after contraction. It binds two calcium ions. In Mus musculus (Mouse), this protein is Parvalbumin alpha (Pvalb).